A 283-amino-acid chain; its full sequence is Pantothenate synthetase (283 aa).

30-37 (MGNLHQGH) provides a ligand contact to ATP. Histidine 37 (proton donor) is an active-site residue. Glutamine 61 serves as a coordination point for (R)-pantoate. Beta-alanine is bound at residue glutamine 61. 149–152 (GEKD) serves as a coordination point for ATP. Glutamine 155 lines the (R)-pantoate pocket. Residues valine 178 and 186–189 (FSSR) contribute to the ATP site.

This sequence belongs to the pantothenate synthetase family. Homodimer.

Its subcellular location is the cytoplasm. It catalyses the reaction (R)-pantoate + beta-alanine + ATP = (R)-pantothenate + AMP + diphosphate + H(+). The protein operates within cofactor biosynthesis; (R)-pantothenate biosynthesis; (R)-pantothenate from (R)-pantoate and beta-alanine: step 1/1. In terms of biological role, catalyzes the condensation of pantoate with beta-alanine in an ATP-dependent reaction via a pantoyl-adenylate intermediate. This is Pantothenate synthetase from Proteus mirabilis (strain HI4320).